We begin with the raw amino-acid sequence, 164 residues long: ATP synthase subunit b (164 aa).

A helical membrane pass occupies residues 6–26 (GELVGNFILVTGSVIVLLLLI).

It belongs to the ATPase B chain family. In terms of assembly, F-type ATPases have 2 components, F(1) - the catalytic core - and F(0) - the membrane proton channel. F(1) has five subunits: alpha(3), beta(3), gamma(1), delta(1), epsilon(1). F(0) has three main subunits: a(1), b(2) and c(10-14). The alpha and beta chains form an alternating ring which encloses part of the gamma chain. F(1) is attached to F(0) by a central stalk formed by the gamma and epsilon chains, while a peripheral stalk is formed by the delta and b chains.

It is found in the cell membrane. F(1)F(0) ATP synthase produces ATP from ADP in the presence of a proton or sodium gradient. F-type ATPases consist of two structural domains, F(1) containing the extramembraneous catalytic core and F(0) containing the membrane proton channel, linked together by a central stalk and a peripheral stalk. During catalysis, ATP synthesis in the catalytic domain of F(1) is coupled via a rotary mechanism of the central stalk subunits to proton translocation. Functionally, component of the F(0) channel, it forms part of the peripheral stalk, linking F(1) to F(0). The polypeptide is ATP synthase subunit b (Streptococcus pyogenes serotype M1).